The chain runs to 358 residues: DnaJ homolog subfamily B member 11 (358 aa).

The signal sequence occupies residues 1-22; the sequence is MAPQNLSTFCLLLLYLIGAVIA. Residues 25-90 form the J domain; the sequence is DFYKILGVPR…EKRKQYDTYG (66 aa). At T188 the chain carries Phosphothreonine. N-linked (GlcNAc...) asparagine glycosylation is present at N261.

Part of a large chaperone multiprotein complex comprising DNAJB11, HSP90B1, HSPA5, HYOU, PDIA2, PDIA4, PDIA6, PPIB, SDF2L1, UGGT1 and very small amounts of ERP29, but not, or at very low levels, CALR nor CANX. Binds to denatured substrates in an ATP-independent manner. Interacts via the J domain with HSPA5 in an ATP-dependent manner. Post-translationally, contains high-mannose Endo H-sensitive carbohydrates. In terms of processing, cys-169, Cys-171, Cys-193 and Cys-196 form intramolecular disulfide bonds. The preferential partner for each Cys is not known.

The protein localises to the endoplasmic reticulum lumen. Functionally, as a co-chaperone for HSPA5 it is required for proper folding, trafficking or degradation of proteins. Binds directly to both unfolded proteins that are substrates for ERAD and nascent unfolded peptide chains, but dissociates from the HSPA5-unfolded protein complex before folding is completed. May help recruiting HSPA5 and other chaperones to the substrate. Stimulates HSPA5 ATPase activity. It is necessary for maturation and correct trafficking of PKD1. The chain is DnaJ homolog subfamily B member 11 (Dnajb11) from Rattus norvegicus (Rat).